We begin with the raw amino-acid sequence, 837 residues long: Semaphorin-4G (837 aa).

A signal peptide spans 1–17 (MWGRLWPLLFSFLTVTA). The Extracellular portion of the chain corresponds to 18–673 (VPGPSLRRPS…GAQLAHDMRM (656 aa)). The region spanning 35–503 (RLTISYEELS…AASGVLQFPL (469 aa)) is the Sema domain. N55, N111, and N126 each carry an N-linked (GlcNAc...) asparagine glycan. An intrachain disulfide couples C104 to C115. Intrachain disulfides connect C133-C142, C268-C375, and C292-C335. An N-linked (GlcNAc...) asparagine glycan is attached at N386. Residues 505–556 (SCSRYQSCYDCILARDPYCGWDSSIHACMVATTVANRTELIQDIERGNRGCE) form the PSI domain. Disulfide bonds link C506–C523 and C515–C532. N-linked (GlcNAc...) asparagine glycans are attached at residues N540 and N596. The Ig-like C2-type domain maps to 565-647 (PPLKTRSVLR…RMLLASYSLT (83 aa)). Cysteines 582 and 630 form a disulfide. The helical transmembrane segment at 674-694 (FYVVAIAILGGLCLILASSLL) threads the bilayer. Topologically, residues 695–837 (YVACLKGGRR…LVEQLDESSV (143 aa)) are cytoplasmic. Positions 721-776 (SAVQLQTVSGQCPGEEDEGDDGEGTGGLESGCLQIIPGEGAPAPPPPPPPPPPAEL) are disordered. The span at 734-743 (GEEDEGDDGE) shows a compositional bias: acidic residues. A compositionally biased stretch (pro residues) spans 762-774 (PAPPPPPPPPPPA). Phosphoserine is present on residues S794 and S836.

The protein belongs to the semaphorin family. Interacts with PLXNB2. In terms of tissue distribution, brain, spinal cord, and several sensory organs as well as specific populations of projection neurons.

The protein resides in the cell membrane. Cell surface receptor for PLXNB2. May play a role in axon guidance. This Mus musculus (Mouse) protein is Semaphorin-4G (Sema4g).